The following is a 122-amino-acid chain: Large ribosomal subunit protein uL14 (122 aa).

Belongs to the universal ribosomal protein uL14 family. As to quaternary structure, part of the 50S ribosomal subunit. Forms a cluster with proteins L3 and L19. In the 70S ribosome, L14 and L19 interact and together make contacts with the 16S rRNA in bridges B5 and B8.

In terms of biological role, binds to 23S rRNA. Forms part of two intersubunit bridges in the 70S ribosome. In Pseudomonas entomophila (strain L48), this protein is Large ribosomal subunit protein uL14.